The following is a 386-amino-acid chain: Vesicle-associated protein 2-2 (386 aa).

An N-acetylmethionine modification is found at Met-1. Residues 1 to 363 are Cytoplasmic-facing; the sequence is MNMPLLDIQP…TKKIVKEVHN (363 aa). Residues 5 to 125 enclose the MSP domain; the sequence is LLDIQPRTLQ…EENKLRVTLV (121 aa). Ser-279 carries the phosphoserine modification. The stretch at 300 to 353 forms a coiled coil; that stretch reads ELKLVKDIEEMKLKVDALESKLKQADSTISKLMEERSISSQHRQSLQHELAELR. Residues 364–384 form a helical; Anchor for type IV membrane protein membrane-spanning segment; it reads GFPLLYVCVVAFIAYVIGHFL.

It belongs to the VAMP-associated protein (VAP) (TC 9.B.17) family. As to quaternary structure, interacts with cowpea mosaic virus (CPMV) NTP-binding protein (NTB).

The protein localises to the endoplasmic reticulum membrane. Its function is as follows. May play a role in vesicle trafficking. The polypeptide is Vesicle-associated protein 2-2 (PVA22) (Arabidopsis thaliana (Mouse-ear cress)).